Here is a 202-residue protein sequence, read N- to C-terminus: tRNA (guanine-N(7)-)-methyltransferase (202 aa).

4 residues coordinate S-adenosyl-L-methionine: Glu34, Glu59, Asp86, and Asp107. Asp107 is an active-site residue. Residues Lys111, Asp143, and 181–184 contribute to the substrate site; that span reads TDYE.

The protein belongs to the class I-like SAM-binding methyltransferase superfamily. TrmB family.

It catalyses the reaction guanosine(46) in tRNA + S-adenosyl-L-methionine = N(7)-methylguanosine(46) in tRNA + S-adenosyl-L-homocysteine. It functions in the pathway tRNA modification; N(7)-methylguanine-tRNA biosynthesis. Catalyzes the formation of N(7)-methylguanine at position 46 (m7G46) in tRNA. The chain is tRNA (guanine-N(7)-)-methyltransferase from Metamycoplasma hominis (strain ATCC 23114 / DSM 25592 / NBRC 14850 / NCTC 10111 / PG21) (Mycoplasma hominis).